The primary structure comprises 2045 residues: Host cell factor 1 (2045 aa).

At Ala-2 the chain carries N-acetylalanine. Ser-6 carries the post-translational modification Phosphoserine. 5 Kelch repeats span residues 44–89 (LIVV…GFVC), 93–140 (RLLV…RLGH), 148–194 (KCYL…ITYG), 217–265 (KLVI…TIGN), and 266–313 (KMYV…LMDT). Residues Lys-105, Lys-163, and Lys-244 each participate in a glycyl lysine isopeptide (Lys-Gly) (interchain with G-Cter in ubiquitin) cross-link. Lys-282 is covalently cross-linked (Glycyl lysine isopeptide (Lys-Gly) (interchain with G-Cter in SUMO2)). An N6-acetyllysine modification is found at Lys-288. Lys-363 is covalently cross-linked (Glycyl lysine isopeptide (Lys-Gly) (interchain with G-Cter in ubiquitin)). A Fibronectin type-III 1 domain is found at 366-457 (PPARVQLVRA…VPQAATAPPS (92 aa)). A disordered region spans residues 407–434 (ATATSPTPNPVPSVPANPPKSPAPAAAA). Residue Ser-411 is modified to Phosphoserine. The span at 413-428 (TPNPVPSVPANPPKSP) shows a compositional bias: pro residues. The interval 500–550 (LVTMRPASQAGKAPVTVTSLPASVRMVVPTQSAQGTVIGSNPQMSGMAALA) is required for interaction with OGT. Omega-N-methylarginine is present on residues Arg-504 and Arg-524. Ser-598, Ser-666, and Ser-669 each carry phosphoserine. The segment at 610–722 (LKTAAAQVGT…KGPLPAGTIL (113 aa)) is interaction with SIN3A. The interval 750–902 (ILGISSVSPS…SLAGAGAHST (153 aa)) is interaction with ZBTB17. Position 813 is an N6-acetyllysine (Lys-813). The interval 813-912 (KIITAVPKIA…SASLATPITT (100 aa)) is interaction with GABP2. HCF repeat repeat units follow at residues 1010–1035 (TLVC…TVVA), 1072–1097 (VRVC…ATSN), and 1101–1126 (QHGC…AMSS). An HCF repeat 4; degenerate repeat occupies 1157 to 1182 (VQGTVKPQCQTQQTNMTTTTMTVQAT). Ser-1204 carries the phosphoserine modification. Arg-1216 is modified (asymmetric dimethylarginine). Disordered stretches follow at residues 1219 to 1242 (LSGP…YTTN), 1302 to 1375 (PCET…TSTG), 1444 to 1475 (TVTS…STNI), and 1494 to 1525 (TTVT…QLPP). Residue Ser-1223 is modified to Phosphoserine. 2 HCF repeat repeats span residues 1295–1320 (TQVC…SNAG) and 1323–1348 (QRVC…ATSN). The segment covering 1308–1321 (TGTTNTATTSNAGS) has biased composition (low complexity). One copy of the HCF repeat 7; degenerate repeat lies at 1358–1383 (QQPASGHPCETHQTTSTGTTMSVSVG). One copy of the HCF repeat 8 repeat lies at 1423–1448 (QRVCSNPPCETHETGTTHTATTVTSN). Thr-1500 carries the post-translational modification Phosphothreonine. Residues 1502–1511 (VPGPSVPPPE) are compositionally biased toward pro residues. 3 positions are modified to phosphoserine: Ser-1506, Ser-1516, and Ser-1781. 2 consecutive Fibronectin type-III domains span residues 1808 to 1898 (PPPP…TCLP) and 1900 to 2016 (FPGA…TSKD). Residues Lys-1817 and Lys-1818 each participate in a glycyl lysine isopeptide (Lys-Gly) (interchain with G-Cter in ubiquitin) cross-link. Ser-1848 is modified (phosphoserine). The segment at 2004–2045 (ATQVRWLQETSKDSSGTKPASKRPMSSPEMKSAPKKSKADGQ) is disordered. Residue Lys-2015 is modified to N6-acetyllysine. Lys-2034 is covalently cross-linked (Glycyl lysine isopeptide (Lys-Gly) (interchain with G-Cter in SUMO2)).

In terms of assembly, composed predominantly of six polypeptides ranging from 110 to 150 kDa and a minor 300 kDa polypeptide. The majority of N- and C-terminal cleavage products remain tightly, albeit non-covalently, associated. Interacts with POU2F1, CREB3, ZBTB17, EGR2, E2F4, CREBZF, SP1, GABP2, Sin3 HDAC complex (SIN3A, HDAC1, HDAC2, SUDS3), SAP30, SIN3B and FHL2. Component of a MLL1 complex, composed of at least the core components KMT2A/MLL1, ASH2L, HCFC1, WDR5 and RBBP5, as well as the facultative components BACC1, CHD8, DPY30, E2F6, HCFC2, HSP70, INO80C, KANSL1, LAS1L, MAX, MCRS1, MEN1, MGA, KAT8, PELP1, PHF20, PRP31, RING2, RUVBL1, RUVBL2, SENP3, TAF1, TAF4, TAF6, TAF7, TAF9 and TEX10. Component of a THAP1/THAP3-HCFC1-OGT complex that is required for the regulation of the transcriptional activity of RRM1. Interacts directly with THAP3 (via its HBM). Interacts (via the Kelch-repeat domain) with THAP1 (via the HBM); the interaction recruits HCHC1 to the RRM1. Interacts with THAP7 and THAP11 (via the HMB). Interacts directly with OGT; the interaction, which requires the HCFC1 cleavage site domain, glycosylates and promotes the proteolytic processing of HCFC1 and retains OGT in the nucleus. Component of the SET1 complex, at least composed of the catalytic subunit (SETD1A or SETD1B), WDR5, WDR82, RBBP5, ASH2L, CXXC1, HCFC1 and DPY30. Component of the NSL complex at least composed of MOF/KAT8, KANSL1, KANSL2, KANSL3, MCRS1, PHF20, OGT1/OGT, WDR5 and HCFC1. Component of a complex at least composed of ZNF335, HCFC1, CCAR2, EMSY, MKI67, RBBP5, ASH2L and WDR5; the complex is formed as a result of interactions between components of a nuclear receptor-mediated transcription complex and a histone methylation complex. Within the complex interacts with ZNF335. Interacts with TET2 and TET3. Interacts with HCFC1R1. Interacts with THAP11. Interacts (via Kelch domain) with KMT2E (via HBM motif). Interacts with E2F1. Accessory scaffold component of the polycomb repressive deubiquitinase (PR-DUB) complex, at least composed of BAP1, one of ASXL1, ASXL2 or (probably) ASXL3 and one of MBD5 or MBD6; the PR-DUB core associates with a number of accessory proteins, including FOXK1, FOXK2, KDM1B, HCFC1, YY1 and OGT. Interacts with YY1 (via Gly-rich region); the interaction is direct. Interacts with BAP1 (via HBM-like motif). In terms of processing, proteolytically cleaved at one or several PPCE--THET sites within the HCF repeats. Further cleavage of the primary N- and C-terminal chains results in a 'trimming' and accumulation of the smaller chains. Cleavage is promoted by O-glycosylation. O-glycosylated. GlcNAcylation by OGT promotes proteolytic processing. Post-translationally, ubiquitinated. Lys-1817 and Lys-1818 are ubiquitinated both via 'Lys-48'- and 'Lys-63'-linked polyubiquitin chains. BAP1 mediated deubiquitination of 'Lys-48'-linked polyubiquitin chains; deubiquitination by BAP1 does not seem to stabilize the protein. Expressed in liver, pituitary gland, skeletal muscle, kidney, eye and brain (at protein level). Also observed at low level in heart, spleen and lung.

It localises to the nucleus. Its subcellular location is the cytoplasm. Its function is as follows. Transcriptional coregulator. Serves as a scaffold protein, bridging interactions between transcription factors, including THAP11 and ZNF143, and transcriptional coregulators. Involved in control of the cell cycle. Also antagonizes transactivation by ZBTB17 and GABP2; represses ZBTB17 activation of the p15(INK4b) promoter and inhibits its ability to recruit p300. Coactivator for EGR2 and GABP2. Tethers the chromatin modifying Set1/Ash2 histone H3 'Lys-4' methyltransferase (H3K4me) and Sin3 histone deacetylase (HDAC) complexes (involved in the activation and repression of transcription respectively) together. As part of the NSL complex it may be involved in acetylation of nucleosomal histone H4 on several lysine residues. Recruits KMT2E to E2F1 responsive promoters promoting transcriptional activation and thereby facilitates G1 to S phase transition. Modulates expression of homeobox protein PDX1, perhaps acting in concert with transcription factor E2F1, thereby regulating pancreatic beta-cell growth and glucose-stimulated insulin secretion. May negatively modulate transcriptional activity of FOXO3. This chain is Host cell factor 1, found in Mus musculus (Mouse).